Reading from the N-terminus, the 745-residue chain is Junction plakoglobin (745 aa).

The residue at position 1 (methionine 1) is an N-acetylmethionine. Threonine 14 carries O-linked (GlcNAc) threonine glycosylation. Residues serine 99 and serine 125 each carry the phosphoserine modification. ARM repeat units lie at residues 132–171 (NYQD…QLSK), 172–215 (KEAS…LSHH), 216–255 (REGL…NLLL), 258–297 (EGAK…LLAY), 298–341 (GNQE…LSVC), 342–381 (PSNK…NLSD), 383–420 (ATKQ…NLTC), 423–464 (SKNK…HLTS), 470–510 (EMAQ…NLAL), 512–551 (PANH…QPYT), 574–613 (PMNR…ELAQ), and 615–661 (KEAA…PDYR). The tract at residues 132-297 (NYQDDAELAT…TTDCLQLLAY (166 aa)) is interaction with DSC1 and DSG1. Serine 182 bears the Phosphoserine mark. The interval 574–661 (PMNRMEIFRL…ISEDKNPDYR (88 aa)) is interaction with DSC1. Serine 665 and serine 730 each carry phosphoserine.

It belongs to the beta-catenin family. As to quaternary structure, homodimer. Component of an E-cadherin/catenin adhesion complex composed of at least E-cadherin/CDH1 and gamma-catenin/JUP, and possibly alpha-catenin/CTNNA1; the complex is located to adherens junctions. The stable association of CTNNA1 is controversial as CTNNA1 was shown not to bind to F-actin when assembled in the complex. Interacts with MUC1. Interacts with CAV1. Interacts with PTPRJ. Interacts with DSG1. Interacts with DSC1 and DSC2. Interacts with PKP2. Interacts with PKP3 (via N-terminus); the interaction is required for PKP3 localization to desmosome cell-cell junctions. Interacts with DSG4. Post-translationally, may be phosphorylated by FER.

It localises to the cell junction. It is found in the adherens junction. The protein localises to the desmosome. The protein resides in the cytoplasm. Its subcellular location is the cytoskeleton. It localises to the cell membrane. It is found in the nucleus. Common junctional plaque protein. The membrane-associated plaques are architectural elements in an important strategic position to influence the arrangement and function of both the cytoskeleton and the cells within the tissue. The presence of plakoglobin in both the desmosomes and in the intermediate junctions suggests that it plays a central role in the structure and function of submembranous plaques. Acts as a substrate for VE-PTP and is required by it to stimulate VE-cadherin function in endothelial cells. Can replace beta-catenin in E-cadherin/catenin adhesion complexes which are proposed to couple cadherins to the actin cytoskeleton. This is Junction plakoglobin from Bos taurus (Bovine).